Consider the following 492-residue polypeptide: UPF0652 protein C22H10.08 (492 aa).

The protein belongs to the UPF0652 family.

It localises to the cytoplasm. Its subcellular location is the nucleus. In Schizosaccharomyces pombe (strain 972 / ATCC 24843) (Fission yeast), this protein is UPF0652 protein C22H10.08.